Consider the following 148-residue polypeptide: Ribosome maturation factor RimP (148 aa).

This sequence belongs to the RimP family.

It localises to the cytoplasm. Functionally, required for maturation of 30S ribosomal subunits. In Nautilia profundicola (strain ATCC BAA-1463 / DSM 18972 / AmH), this protein is Ribosome maturation factor RimP.